Reading from the N-terminus, the 309-residue chain is Taste receptor type 2 member 66 (309 aa).

Position 1 (Met1) is a topological domain, extracellular. The chain crosses the membrane as a helical span at residues 2–22 (ITFLPIIFSILIVVTFVIGNF). Residues 23–46 (ANGFIALANSIEWFKRQKISFADQ) are Cytoplasmic-facing. A helical membrane pass occupies residues 47–67 (ILTALAVPRVGLLWVLLLNWY). Topologically, residues 68–86 (ATELNPAFYSIEVRITAYN) are extracellular. Residues 87–107 (LWAVINHFSNWLATSLSIFYL) form a helical membrane-spanning segment. At 108 to 126 (LKIANFSNLIFLRLKRRVK) the chain is on the cytoplasmic side. The chain crosses the membrane as a helical span at residues 127 to 147 (SVVLVILLGPLLFLVCHLFVI). Residues 148–178 (NMNQIIWTKEYEGNMTWKIKLRSAMYLSNTT) lie on the Extracellular side of the membrane. Asn161 and Asn176 each carry an N-linked (GlcNAc...) asparagine glycan. The helical transmembrane segment at 179 to 199 (VTILANLVPFTVTLISFLLLV) threads the bilayer. Residues 200-229 (CSLCKHLKKMQLHGKGSQDPSTKVHIKALQ) lie on the Cytoplasmic side of the membrane. The chain crosses the membrane as a helical span at residues 230-250 (TVISFLLLCAIYFVSVIISVW). At 251–259 (SFKNLENKP) the chain is on the extracellular side. A helical transmembrane segment spans residues 260-280 (VFMFCQAIGFSCSSAHPFILI). At 281–309 (WGNKKLKQPFLSVLWQMRYWVKGEKPSSS) the chain is on the cytoplasmic side.

The protein belongs to the G-protein coupled receptor T2R family.

It localises to the membrane. In terms of biological role, receptor that may play a role in the perception of bitterness and is gustducin-linked. May play a role in sensing the chemical composition of the gastrointestinal content. The activity of this receptor may stimulate alpha gustducin, mediate PLC-beta-2 activation and lead to the gating of TRPM5. This chain is Taste receptor type 2 member 66 (TAS2R66), found in Pan paniscus (Pygmy chimpanzee).